The sequence spans 291 residues: Ribosome biogenesis protein BRX1 (291 aa).

A Brix domain is found at 31–232; sequence QRTLLISSRG…VILILEGSFG (202 aa). Ser-285 is subject to Phosphoserine.

The protein belongs to the BRX1 family. As to quaternary structure, part of a complex that includes BRX1, RPF1, RPF2 and SSF1 or SSF2.

It localises to the nucleus. The protein localises to the nucleolus. In terms of biological role, required for biogenesis of the 60S ribosomal subunit. This chain is Ribosome biogenesis protein BRX1 (BRX1), found in Saccharomyces cerevisiae (strain ATCC 204508 / S288c) (Baker's yeast).